A 497-amino-acid polypeptide reads, in one-letter code: Cytochrome P450 monooxygenase cicH (497 aa).

The helical transmembrane segment at 2-19 (AILVRLFFALFVVSVYFF) threads the bilayer. Heme is bound at residue Cys439. An N-linked (GlcNAc...) asparagine glycan is attached at Asn443.

It belongs to the cytochrome P450 family. It depends on heme as a cofactor.

It is found in the membrane. It functions in the pathway phytotoxin biosynthesis. Cytochrome P450 monooxygenase; part of the gene cluster that mediates the biosynthesis of cichorine, a phytotoxin active against knapweed, corn, and soybeans. The first step in the pathway is performed by the non-reducing polyketide synthase pkbA that condenses one acetyl-CoA starter unit with 3 malonyl-CoA units. PkbA also catalyzes one methylation step to produce 3-methylorsellinate. The nonribosomal peptide synthase-like protein cicB, the cytochrome P450 monooxygenase cicH and the O-methyltransferase cicE are involved in the conversion of 3-methylorsellinate into nidulol. CicB converts 3-methylorsellinate to a yet unidentified intermediate, cicH may play a ring-closing role for cichorine and cicE is plausibly responsible for the methylation of one of the phenol groups. The oxidoreductase cicC acts downstream with still unidentified enzymes to further convert nidulol into cichorine. The chain is Cytochrome P450 monooxygenase cicH from Emericella nidulans (strain FGSC A4 / ATCC 38163 / CBS 112.46 / NRRL 194 / M139) (Aspergillus nidulans).